The sequence spans 492 residues: Protein nucleotidyltransferase YdiU (492 aa).

8 residues coordinate ATP: Gly-94, Gly-96, Arg-97, Lys-117, Asp-129, Gly-130, Arg-180, and Arg-187. Asp-257 serves as the catalytic Proton acceptor. 2 residues coordinate Mg(2+): Asn-258 and Asp-267. Asp-267 contacts ATP.

This sequence belongs to the SELO family. Requires Mg(2+) as cofactor. Mn(2+) serves as cofactor.

The enzyme catalyses L-seryl-[protein] + ATP = 3-O-(5'-adenylyl)-L-seryl-[protein] + diphosphate. It catalyses the reaction L-threonyl-[protein] + ATP = 3-O-(5'-adenylyl)-L-threonyl-[protein] + diphosphate. It carries out the reaction L-tyrosyl-[protein] + ATP = O-(5'-adenylyl)-L-tyrosyl-[protein] + diphosphate. The catalysed reaction is L-histidyl-[protein] + UTP = N(tele)-(5'-uridylyl)-L-histidyl-[protein] + diphosphate. The enzyme catalyses L-seryl-[protein] + UTP = O-(5'-uridylyl)-L-seryl-[protein] + diphosphate. It catalyses the reaction L-tyrosyl-[protein] + UTP = O-(5'-uridylyl)-L-tyrosyl-[protein] + diphosphate. In terms of biological role, nucleotidyltransferase involved in the post-translational modification of proteins. It can catalyze the addition of adenosine monophosphate (AMP) or uridine monophosphate (UMP) to a protein, resulting in modifications known as AMPylation and UMPylation. The protein is Protein nucleotidyltransferase YdiU of Halalkalibacterium halodurans (strain ATCC BAA-125 / DSM 18197 / FERM 7344 / JCM 9153 / C-125) (Bacillus halodurans).